We begin with the raw amino-acid sequence, 343 residues long: Dihydroorotase (343 aa).

Zn(2+)-binding residues include His-13 and His-15. Substrate-binding positions include 15–17 (HLR) and Asn-41. Zn(2+) is bound by residues Lys-99, His-136, and His-174. Lys-99 is modified (N6-carboxylysine). Substrate is bound at residue His-136. Leu-219 is a binding site for substrate. Asp-247 serves as a coordination point for Zn(2+). Asp-247 is an active-site residue. Residues His-251 and Ala-263 each coordinate substrate.

It belongs to the metallo-dependent hydrolases superfamily. DHOase family. Class II DHOase subfamily. As to quaternary structure, homodimer. It depends on Zn(2+) as a cofactor.

It catalyses the reaction (S)-dihydroorotate + H2O = N-carbamoyl-L-aspartate + H(+). The protein operates within pyrimidine metabolism; UMP biosynthesis via de novo pathway; (S)-dihydroorotate from bicarbonate: step 3/3. In terms of biological role, catalyzes the reversible cyclization of carbamoyl aspartate to dihydroorotate. The polypeptide is Dihydroorotase (Shewanella baltica (strain OS155 / ATCC BAA-1091)).